Consider the following 1182-residue polypeptide: Rho guanine nucleotide exchange factor osg-1 (1182 aa).

A compositionally biased stretch (acidic residues) spans 1–12 (MLNPNDADDSDS). Residues 1 to 96 (MLNPNDADDS…TNSEPNVDMP (96 aa)) are disordered. Residues 29–41 (ATVSPSTRNSFYN) are compositionally biased toward polar residues. The segment covering 69–78 (ASRERSESRR) has biased composition (basic and acidic residues). A DH domain is found at 357–544 (VRHLAARELL…HCLAVAINQH (188 aa)). Positions 637–669 (EDVQISKDTLSQLEEVERKLESSREDDRVLKKM) form a coiled coil. The segment at 863 to 884 (INSSGSDTESSSDEGTSTAGQT) is disordered. Positions 865–879 (SSGSDTESSSDEGTS) are enriched in low complexity. Residues 897–922 (VVNSTERVRSRARDRLARLRNSITSI) adopt a coiled-coil conformation.

As to expression, expressed in muscles in the body wall and head, and in the nervous system in neurons including FLP and ASE neurons in the head.

Its function is as follows. Probable guanine nucleotide exchange factor which regulates the Rho GTPase rho-1. Functions in ASE sensory neurons where it promotes neuronal degeneration under conditions of oxidative stress. This is Rho guanine nucleotide exchange factor osg-1 from Caenorhabditis elegans.